The primary structure comprises 319 residues: 4-diphosphocytidyl-2-C-methyl-D-erythritol kinase (319 aa).

Residue Lys21 is part of the active site. Pro106–Ser116 contributes to the ATP binding site. The active site involves Asp148.

The protein belongs to the GHMP kinase family. IspE subfamily.

The catalysed reaction is 4-CDP-2-C-methyl-D-erythritol + ATP = 4-CDP-2-C-methyl-D-erythritol 2-phosphate + ADP + H(+). The protein operates within isoprenoid biosynthesis; isopentenyl diphosphate biosynthesis via DXP pathway; isopentenyl diphosphate from 1-deoxy-D-xylulose 5-phosphate: step 3/6. Catalyzes the phosphorylation of the position 2 hydroxy group of 4-diphosphocytidyl-2C-methyl-D-erythritol. This is 4-diphosphocytidyl-2-C-methyl-D-erythritol kinase from Prochlorococcus marinus (strain MIT 9313).